A 515-amino-acid polypeptide reads, in one-letter code: MALMILPLIGSVSVSETLVAMITVCMIYMLMKFLHPDVPEAPPAPGPQALPIIGNVWSWENGLPEPHGHGQRYGDILQIQIGMRSVVVLSGHETVRQALIKQGHDLRPPDLYSFQFINDGKSLAFSTDQAGVWSPPKAGHECPALLFHARGHHAAVLLHVGGACLQGGRLPRQAAVQRHGTDASFDPFRHIVVSVANVICGMCFGRRYGHEDQELLSLVNLTDEFGKVVGSGNLADFIPLLRFLPNATMKRFMAINERFMTFVQKIVTEHYNTYDKDNIRDITDSLIDHCEDRKLDENSNIQMSDEKIVGIVNDLFGAGFDTVSTALSWSVMYLVAHPEIQERLHQEIKDKVGLSRSPVLTDRHNLPILEAFIFEIFRHSSFLPFTIPHCATKDTSLDGYFIPKDTCVFINQWQINHDPELWKEPSTFNPDRFLSADASELNKLAGEKVMLFGMGKRRCIGEMVARNEVFLFLAILVQRLTFHAVPGEPLDMTPEYGLTMKHKRCHLRATVRTTE.

A substrate-binding site is contributed by phenylalanine 225. A heme-binding site is contributed by cysteine 459.

The protein belongs to the cytochrome P450 family. It depends on heme as a cofactor.

It is found in the endoplasmic reticulum membrane. Its subcellular location is the microsome membrane. It catalyses the reaction an organic molecule + reduced [NADPH--hemoprotein reductase] + O2 = an alcohol + oxidized [NADPH--hemoprotein reductase] + H2O + H(+). Cytochromes P450 are a group of heme-thiolate monooxygenases. They oxidize a variety of structurally unrelated compounds, including steroids, fatty acids, and xenobiotics. The protein is Cytochrome P450 1A1 (cyp1a1) of Microgadus tomcod (Atlantic tomcod).